The chain runs to 252 residues: Triosephosphate isomerase (252 aa).

10–12 (NWK) provides a ligand contact to substrate. H96 acts as the Electrophile in catalysis. E168 (proton acceptor) is an active-site residue. Residues G174, S214, and 235 to 236 (GG) contribute to the substrate site.

The protein belongs to the triosephosphate isomerase family. Homodimer.

The protein resides in the cytoplasm. It catalyses the reaction D-glyceraldehyde 3-phosphate = dihydroxyacetone phosphate. It functions in the pathway carbohydrate biosynthesis; gluconeogenesis. Its pathway is carbohydrate degradation; glycolysis; D-glyceraldehyde 3-phosphate from glycerone phosphate: step 1/1. Its function is as follows. Involved in the gluconeogenesis. Catalyzes stereospecifically the conversion of dihydroxyacetone phosphate (DHAP) to D-glyceraldehyde-3-phosphate (G3P). The sequence is that of Triosephosphate isomerase from Lactobacillus acidophilus (strain ATCC 700396 / NCK56 / N2 / NCFM).